The following is a 332-amino-acid chain: Ribosomal RNA small subunit methyltransferase C (332 aa).

It belongs to the methyltransferase superfamily. RsmC family. As to quaternary structure, monomer.

It is found in the cytoplasm. It carries out the reaction guanosine(1207) in 16S rRNA + S-adenosyl-L-methionine = N(2)-methylguanosine(1207) in 16S rRNA + S-adenosyl-L-homocysteine + H(+). Functionally, specifically methylates the guanine in position 1207 of 16S rRNA in the 30S particle. This Pseudomonas putida (strain GB-1) protein is Ribosomal RNA small subunit methyltransferase C.